Here is a 528-residue protein sequence, read N- to C-terminus: NAC domain-containing protein 13 (528 aa).

Residues 10-160 (LAPGFRFHPT…AYVLYKIYKK (151 aa)) form the NAC domain. The DNA-binding element occupies 107–166 (VGEKKTLVFHRGRAPNGERTNWVMHEYTLHKEELKRCGGEDVKDAYVLYKIYKKSGSGPK). Positions 388-419 (EAPGTGDSSEFLNPVPSGISTTNEDDPSKDES) are disordered. The chain crosses the membrane as a helical span at residues 499–519 (FFCLSIIGALCALFWVIIGTM).

As to quaternary structure, interacts with RCD1. Expressed in roots, rosette leaves, shoot apex, stems and flowers.

The protein resides in the endoplasmic reticulum membrane. It is found in the nucleus. Transcriptional activator activated by proteolytic cleavage through regulated intramembrane proteolysis (RIP). Involved in oxidative stress tolerance by mediating regulation of mitochondrial retrograde signaling during mitochondrial dysfunction. Interacts directly with the mitochondrial dysfunction DNA consensus motif 5'-CTTGNNNNNCA[AC]G-3', a cis-regulatory elements of several mitochondrial retrograde regulation-induced genes, and triggers increased oxidative stress tolerance. This is NAC domain-containing protein 13 from Arabidopsis thaliana (Mouse-ear cress).